The following is a 929-amino-acid chain: Protein translocase subunit SecA (929 aa).

ATP contacts are provided by residues Q87, 105–109 (GEGKT), and D512. Residues C914, C916, C925, and H926 each contribute to the Zn(2+) site.

Belongs to the SecA family. As to quaternary structure, monomer and homodimer. Part of the essential Sec protein translocation apparatus which comprises SecA, SecYEG and auxiliary proteins SecDF-YajC and YidC. Requires Zn(2+) as cofactor.

The protein localises to the cell inner membrane. The protein resides in the cytoplasm. The catalysed reaction is ATP + H2O + cellular proteinSide 1 = ADP + phosphate + cellular proteinSide 2.. In terms of biological role, part of the Sec protein translocase complex. Interacts with the SecYEG preprotein conducting channel. Has a central role in coupling the hydrolysis of ATP to the transfer of proteins into and across the cell membrane, serving both as a receptor for the preprotein-SecB complex and as an ATP-driven molecular motor driving the stepwise translocation of polypeptide chains across the membrane. This Psychrobacter arcticus (strain DSM 17307 / VKM B-2377 / 273-4) protein is Protein translocase subunit SecA.